We begin with the raw amino-acid sequence, 383 residues long: Succinate--CoA ligase [ADP-forming] subunit beta (383 aa).

The ATP-grasp domain occupies 9-236 (KELLGRFGLR…VEAADPQEHR (228 aa)). ATP contacts are provided by residues Lys-45, 52–54 (GRG), Glu-91, Ala-94, and Glu-99. Mg(2+) contacts are provided by Asn-191 and Asp-205. Substrate is bound by residues Asn-256 and 313–315 (GIT).

It belongs to the succinate/malate CoA ligase beta subunit family. In terms of assembly, heterotetramer of two alpha and two beta subunits. Mg(2+) is required as a cofactor.

The catalysed reaction is succinate + ATP + CoA = succinyl-CoA + ADP + phosphate. It carries out the reaction GTP + succinate + CoA = succinyl-CoA + GDP + phosphate. It participates in carbohydrate metabolism; tricarboxylic acid cycle; succinate from succinyl-CoA (ligase route): step 1/1. Functionally, succinyl-CoA synthetase functions in the citric acid cycle (TCA), coupling the hydrolysis of succinyl-CoA to the synthesis of either ATP or GTP and thus represents the only step of substrate-level phosphorylation in the TCA. The beta subunit provides nucleotide specificity of the enzyme and binds the substrate succinate, while the binding sites for coenzyme A and phosphate are found in the alpha subunit. This Rubrobacter xylanophilus (strain DSM 9941 / JCM 11954 / NBRC 16129 / PRD-1) protein is Succinate--CoA ligase [ADP-forming] subunit beta.